The primary structure comprises 562 residues: Sulfite reductase [NADPH] hemoprotein beta-component (562 aa).

The [4Fe-4S] cluster site is built by Cys-426, Cys-432, Cys-471, and Cys-475. Siroheme is bound at residue Cys-475.

This sequence belongs to the nitrite and sulfite reductase 4Fe-4S domain family. Alpha(8)-beta(8). The alpha component is a flavoprotein, the beta component is a hemoprotein. Siroheme serves as cofactor. [4Fe-4S] cluster is required as a cofactor.

It catalyses the reaction hydrogen sulfide + 3 NADP(+) + 3 H2O = sulfite + 3 NADPH + 4 H(+). It participates in sulfur metabolism; hydrogen sulfide biosynthesis; hydrogen sulfide from sulfite (NADPH route): step 1/1. Functionally, component of the sulfite reductase complex that catalyzes the 6-electron reduction of sulfite to sulfide. This is one of several activities required for the biosynthesis of L-cysteine from sulfate. In Shewanella denitrificans (strain OS217 / ATCC BAA-1090 / DSM 15013), this protein is Sulfite reductase [NADPH] hemoprotein beta-component.